Here is a 265-residue protein sequence, read N- to C-terminus: Apolipoprotein A-I (265 aa).

An N-terminal signal peptide occupies residues 1 to 16; the sequence is MKAAVLIWLFLMGSQA. Repeat copies occupy residues 66 to 87 and 88 to 109. Positions 66 to 265 are 10 X approximate tandem repeats; it reads LKLLDNWDSL…EEYTKKLSSQ (200 aa). Met-108 carries the methionine sulfoxide modification. A 3; half-length repeat occupies 110-120; the sequence is KDLEEVKAQVQ. 5 tandem repeats follow at residues 121 to 142, 143 to 164, 165 to 186, 187 to 208, and 209 to 230. The residue at position 134 (Met-134) is a Methionine sulfoxide. One copy of the 9; half-length repeat lies at 231–241; that stretch reads PALDDLRQGLL. Repeat unit 10 spans residues 242 to 265; the sequence is PVLESFKVSFLSALEEYTKKLSSQ.

This sequence belongs to the apolipoprotein A1/A4/E family. In terms of assembly, homodimer. Interacts with APOA1BP and CLU. Component of a sperm activating protein complex (SPAP), consisting of APOA1, an immunoglobulin heavy chain, an immunoglobulin light chain and albumin. Interacts with NDRG1. Interacts with SCGB3A2. Interacts with NAXE and YJEFN3. Post-translationally, glycosylated. In terms of processing, palmitoylated. Phosphorylation sites are present in the extracellular medium.

The protein localises to the secreted. Functionally, participates in the reverse transport of cholesterol from tissues to the liver for excretion by promoting cholesterol efflux from tissues and by acting as a cofactor for the lecithin cholesterol acyltransferase (LCAT). As part of the SPAP complex, activates spermatozoa motility. This is Apolipoprotein A-I (APOA1) from Aotus nancymaae (Ma's night monkey).